The chain runs to 267 residues: Indole-3-glycerol phosphate synthase (267 aa).

It belongs to the TrpC family.

The enzyme catalyses 1-(2-carboxyphenylamino)-1-deoxy-D-ribulose 5-phosphate + H(+) = (1S,2R)-1-C-(indol-3-yl)glycerol 3-phosphate + CO2 + H2O. It participates in amino-acid biosynthesis; L-tryptophan biosynthesis; L-tryptophan from chorismate: step 4/5. The sequence is that of Indole-3-glycerol phosphate synthase from Polynucleobacter asymbioticus (strain DSM 18221 / CIP 109841 / QLW-P1DMWA-1) (Polynucleobacter necessarius subsp. asymbioticus).